We begin with the raw amino-acid sequence, 529 residues long: Bifunctional purine biosynthesis protein PurH (529 aa).

Residues 1–148 (MQQRRPVRRA…KNHKDVAIVV (148 aa)) form the MGS-like domain. Residue lysine 287 is modified to N6-acetyllysine.

This sequence belongs to the PurH family.

It carries out the reaction (6R)-10-formyltetrahydrofolate + 5-amino-1-(5-phospho-beta-D-ribosyl)imidazole-4-carboxamide = 5-formamido-1-(5-phospho-D-ribosyl)imidazole-4-carboxamide + (6S)-5,6,7,8-tetrahydrofolate. The enzyme catalyses IMP + H2O = 5-formamido-1-(5-phospho-D-ribosyl)imidazole-4-carboxamide. The protein operates within purine metabolism; IMP biosynthesis via de novo pathway; 5-formamido-1-(5-phospho-D-ribosyl)imidazole-4-carboxamide from 5-amino-1-(5-phospho-D-ribosyl)imidazole-4-carboxamide (10-formyl THF route): step 1/1. It participates in purine metabolism; IMP biosynthesis via de novo pathway; IMP from 5-formamido-1-(5-phospho-D-ribosyl)imidazole-4-carboxamide: step 1/1. The protein is Bifunctional purine biosynthesis protein PurH of Escherichia coli O6:H1 (strain CFT073 / ATCC 700928 / UPEC).